The primary structure comprises 1126 residues: MTISDKIRIYELSRDLNLENKDILDAAQKLSISVKSHSSSISSEEAKKIKNLINKKNPDKTILSINKPSIKKDNFKQNKEDKSPVLSSKQGKPLKNNSNKKPLLIKPLNKPESVKKISNQLQNPNKPNIVNSSQSRANLTNTNSKPSQNFNQDKKTFVNNTPPPIKSPAKPPIQLIAKPKNINNNVKSSESSQNIARAEDKRRLSSKPDQNTNKPKTKNFNNRKNTPELVGAPIRREDPIINPNKQNNNKQNIAFKQTASNRPGSPNRPGMPNRPGLRNKPSDQGRPGSFNRQGNPNRPGSPNRPGMPNRPGLRNKPSDQGRPGSFNRQGNPNRPGSPNGPGMPNNRPGSKFNGQNSSGIRKPVSPNELLQLQKNNNSEKDKIGIKNNSKQNIEVPKQKAKAPNNRPNATPSSKKPPHRTFSNSSKKPGKTDWDDSAKLEALRSKNTQKQRQKVHIIGENDDSLTSETSGYSGEKISILSASLARPKKGKSDESKSQKTIKQFKKKKKETTRQRQKRRAMELKAAKEAKQVRPEMIIVPEDNLTVQELADKLSLESSEIIKSLFFKGITATVTQSLDLATIETVAEEFGVPVLQDDIQEAAEKTVDMIESEDIDNLIRRPPVITVMGHVDHGKTSLLDSIRESRIASGEAGGITQHIGAYQVEFEHESQKKKLTFLDTPGHEAFTAMRARGTKVTDVAVLVVAADDGCRPQTLEAISHARAAKVPIVVAINKIDKEGASPERVKQELSEKDLIAEDWGGDTVMVPVSAIKKQNIDKLLEMILLVSDVEDLQANPDRFAKGTVIEAHLDKAKGPVATLLVQNGTLKSGDVLAAGSVLGKIRAMVDEHGNRIKEAGPSFPVEALGFSEVPTAGDEFEVYPDEKTARAIVGERATDARATKLAQQMASRRVSLSSLSTQANDGELKELNLILKADVQGSVEAILGSLEQLPKNEVQVRVLLSAPGEITETDIDLAAASGSVIVGFNTSLASGAKRAADANDVDIREYEVIYKLLEDIQLAMEGLLEPDLVEESLGQAEVRATFSVGKGAIAGCYIQTGKLQRNCSLRVIRSEKVIFEGNLDSLKRVKDDVKEVNTGFECGVGCDKFSSWVEGDVIEAFKFVTKKRTLSQ.

Positions 63–519 (LSINKPSIKK…TTRQRQKRRA (457 aa)) are disordered. Residues 70 to 83 (IKKDNFKQNKEDKS) are compositionally biased toward basic and acidic residues. A compositionally biased stretch (low complexity) spans 93 to 111 (PLKNNSNKKPLLIKPLNKP). Residues 116-151 (KISNQLQNPNKPNIVNSSQSRANLTNTNSKPSQNFN) show a composition bias toward polar residues. The span at 161 to 171 (TPPPIKSPAKP) shows a compositional bias: pro residues. A compositionally biased stretch (polar residues) spans 181 to 195 (NINNNVKSSESSQNI). 2 stretches are compositionally biased toward low complexity: residues 211 to 224 (NTNK…NNRK) and 240 to 252 (IINP…NKQN). A compositionally biased stretch (polar residues) spans 254–264 (AFKQTASNRPG). Low complexity-rich tracts occupy residues 291–315 (NRQG…GLRN) and 327–349 (NRQG…NRPG). The segment covering 429–443 (GKTDWDDSAKLEALR) has biased composition (basic and acidic residues). Over residues 501 to 517 (KQFKKKKKETTRQRQKR) the composition is skewed to basic residues. One can recognise a tr-type G domain in the interval 618–790 (RRPPVITVMG…ILLVSDVEDL (173 aa)). The G1 stretch occupies residues 627–634 (GHVDHGKT). Residue 627–634 (GHVDHGKT) participates in GTP binding. The interval 652–656 (GITQH) is G2. A G3 region spans residues 677 to 680 (DTPG). GTP contacts are provided by residues 677 to 681 (DTPGH) and 731 to 734 (NKID). Residues 731–734 (NKID) form a G4 region. Residues 767–769 (SAI) form a G5 region.

The protein belongs to the TRAFAC class translation factor GTPase superfamily. Classic translation factor GTPase family. IF-2 subfamily.

It is found in the cytoplasm. Functionally, one of the essential components for the initiation of protein synthesis. Protects formylmethionyl-tRNA from spontaneous hydrolysis and promotes its binding to the 30S ribosomal subunits. Also involved in the hydrolysis of GTP during the formation of the 70S ribosomal complex. The sequence is that of Translation initiation factor IF-2 from Prochlorococcus marinus (strain AS9601).